The primary structure comprises 147 residues: Large ribosomal subunit protein uL15 (147 aa).

Residues 1 to 57 (MRLHDVKPQKGSKKRKKRVARGISAGQGASAGLGMRGQKSRSGSGTRPGFEGGQQPL) are disordered. Residues 10 to 20 (KGSKKRKKRVA) are compositionally biased toward basic residues.

Belongs to the universal ribosomal protein uL15 family. In terms of assembly, part of the 50S ribosomal subunit.

Functionally, binds to the 23S rRNA. This is Large ribosomal subunit protein uL15 from Nostoc punctiforme (strain ATCC 29133 / PCC 73102).